The primary structure comprises 315 residues: Olfactory receptor 3A1 (315 aa).

Over 1–28 (MQPESGANGTVIAEFILLGLLEAPGLQP) the chain is Extracellular. Asn8 carries N-linked (GlcNAc...) asparagine glycosylation. A helical membrane pass occupies residues 29–52 (VVFVLFLFAYLVTVGGNLSILAAV). The Cytoplasmic portion of the chain corresponds to 53-60 (LVEPKLHS). Residues 61 to 82 (PMYFFLGNLSVLDVGCISVTVP) form a helical membrane-spanning segment. The Extracellular segment spans residues 83–103 (SMLSRLLSRKRAVPCGACLTQ). Cysteines 100 and 192 form a disulfide. Residues 104-123 (LFFFHLFVGVDCFLLTAMAY) traverse the membrane as a helical segment. The Cytoplasmic segment spans residues 124–143 (DRFLAICRPLTYSTRMSQTV). Residues 144–161 (QRMLVAASWACAFTNALT) form a helical membrane-spanning segment. Over 162–199 (HTVAMSTLNFCGPNEVNHFYCDLPQLFQLSCSSTQLNE) the chain is Extracellular. Residues 200-223 (LLLFAVGFIMAGTPMALIVISYIH) traverse the membrane as a helical segment. At 224 to 240 (VAAAVLRIRSVEGRKKA) the chain is on the cytoplasmic side. The helical transmembrane segment at 241 to 264 (FSTCGSHLTVVAMFYGSGIFNYMR) threads the bilayer. At 265–275 (LGSTKLSDKDK) the chain is on the extracellular side. Residues 276–295 (AVGIFNTVINPMVNPIIYRF) traverse the membrane as a helical segment. Residues 296 to 315 (RNPEVQSAIWRMLTGRRSLA) are Cytoplasmic-facing.

This sequence belongs to the G-protein coupled receptor 1 family.

The protein resides in the cell membrane. Odorant receptor. The protein is Olfactory receptor 3A1 (OR3A1) of Pan troglodytes (Chimpanzee).